We begin with the raw amino-acid sequence, 446 residues long: Putative diacyglycerol O-acyltransferase MT3481 (446 aa).

His129 (proton acceptor) is an active-site residue. The interval 425–446 is disordered; sequence SRALPSAARRGRPSVPTARARH.

Belongs to the long-chain O-acyltransferase family.

It carries out the reaction an acyl-CoA + a 1,2-diacyl-sn-glycerol = a triacyl-sn-glycerol + CoA. It participates in glycerolipid metabolism; triacylglycerol biosynthesis. This chain is Putative diacyglycerol O-acyltransferase MT3481, found in Mycobacterium tuberculosis (strain CDC 1551 / Oshkosh).